The sequence spans 773 residues: LON peptidase N-terminal domain and RING finger protein 1 (773 aa).

Residues methionine 1–glutamate 29 are disordered. One copy of the TPR 1 repeat lies at tryptophan 48–alanine 81. An RING-type 1 zinc finger spans residues cysteine 123 to arginine 159. TPR repeat units follow at residues alanine 212–aspartate 244, isoleucine 246–tryptophan 278, and proline 279–phenylalanine 312. Over residues glutamate 359–lysine 370 the composition is skewed to polar residues. The segment at glutamate 359–asparagine 388 is disordered. Position 431 is a phosphoserine (serine 431). The segment at cysteine 479–lysine 517 adopts an RING-type 2 zinc-finger fold. The Lon N-terminal domain maps to threonine 558–serine 768.

The sequence is that of LON peptidase N-terminal domain and RING finger protein 1 (LONRF1) from Homo sapiens (Human).